Reading from the N-terminus, the 99-residue chain is C-C motif chemokine 8 (99 aa).

The first 23 residues, 1-23, serve as a signal peptide directing secretion; it reads MKVSAGILCLLLVAATFGTQVLA. Q24 is subject to Pyrrolidone carboxylic acid. Disulfide bonds link C34/C59 and C35/C75.

It belongs to the intercrine beta (chemokine CC) family. In terms of assembly, monomer or homodimer; in equilibrium.

It is found in the secreted. Functionally, chemotactic factor that attracts monocytes. This protein can bind heparin. This chain is C-C motif chemokine 8 (CCL8), found in Bos taurus (Bovine).